The chain runs to 143 residues: MFLGTYTPKLDDKGRLTLPAKFRDALAGGLMVTKSQDHSLAVYPRAEFEQLARRASKASKSNPDARAFLRNLAAGTDEQHPDAQGRITLSADHRRYASLSKDCVVIGAVDYLEIWDAQAWQDYQQTHEENFSAASDEALGDII.

SpoVT-AbrB domains follow at residues 5–47 (TYTP…PRAE) and 76–119 (TDEQ…DAQA).

Belongs to the MraZ family. As to quaternary structure, forms oligomers.

It is found in the cytoplasm. Its subcellular location is the nucleoid. The chain is Transcriptional regulator MraZ from Mycobacterium avium (strain 104).